A 168-amino-acid polypeptide reads, in one-letter code: Large ribosomal subunit protein uL10 (168 aa).

This sequence belongs to the universal ribosomal protein uL10 family. Part of the ribosomal stalk of the 50S ribosomal subunit. The N-terminus interacts with L11 and the large rRNA to form the base of the stalk. The C-terminus forms an elongated spine to which L12 dimers bind in a sequential fashion forming a multimeric L10(L12)X complex.

Functionally, forms part of the ribosomal stalk, playing a central role in the interaction of the ribosome with GTP-bound translation factors. This chain is Large ribosomal subunit protein uL10, found in Pediococcus pentosaceus (strain ATCC 25745 / CCUG 21536 / LMG 10740 / 183-1w).